The primary structure comprises 275 residues: 2-dehydro-3-deoxyphosphooctonate aldolase (275 aa).

It belongs to the KdsA family.

The protein localises to the cytoplasm. It catalyses the reaction D-arabinose 5-phosphate + phosphoenolpyruvate + H2O = 3-deoxy-alpha-D-manno-2-octulosonate-8-phosphate + phosphate. It functions in the pathway carbohydrate biosynthesis; 3-deoxy-D-manno-octulosonate biosynthesis; 3-deoxy-D-manno-octulosonate from D-ribulose 5-phosphate: step 2/3. Its pathway is bacterial outer membrane biogenesis; lipopolysaccharide biosynthesis. This is 2-dehydro-3-deoxyphosphooctonate aldolase from Francisella tularensis subsp. novicida (strain U112).